Consider the following 308-residue polypeptide: uncharacterized protein (308 aa).

The N-terminal stretch at 1 to 18 (MKIILLFLAALASFTVHA) is a signal peptide.

This is an uncharacterized protein from Escherichia coli (strain K12).